The sequence spans 382 residues: Galactokinase (382 aa).

34-37 is a substrate binding site; the sequence is EHTD. 124-130 is an ATP binding site; sequence GAGLSSS. 2 residues coordinate Mg(2+): Ser-130 and Glu-162. The Proton acceptor role is filled by Asp-174. Position 223 (Tyr-223) interacts with substrate.

Belongs to the GHMP kinase family. GalK subfamily.

The protein resides in the cytoplasm. It catalyses the reaction alpha-D-galactose + ATP = alpha-D-galactose 1-phosphate + ADP + H(+). It functions in the pathway carbohydrate metabolism; galactose metabolism. Functionally, catalyzes the transfer of the gamma-phosphate of ATP to D-galactose to form alpha-D-galactose-1-phosphate (Gal-1-P). In Salmonella schwarzengrund (strain CVM19633), this protein is Galactokinase.